The primary structure comprises 428 residues: 3-phosphoshikimate 1-carboxyvinyltransferase (428 aa).

3-phosphoshikimate is bound by residues K21, S22, and R26. Position 21 (K21) interacts with phosphoenolpyruvate. Phosphoenolpyruvate is bound by residues G91 and R119. 3-phosphoshikimate-binding residues include S164, Q166, D313, and K340. Phosphoenolpyruvate is bound at residue Q166. Catalysis depends on D313, which acts as the Proton acceptor. Residues R344 and R386 each contribute to the phosphoenolpyruvate site.

This sequence belongs to the EPSP synthase family. In terms of assembly, monomer.

Its subcellular location is the cytoplasm. The catalysed reaction is 3-phosphoshikimate + phosphoenolpyruvate = 5-O-(1-carboxyvinyl)-3-phosphoshikimate + phosphate. The protein operates within metabolic intermediate biosynthesis; chorismate biosynthesis; chorismate from D-erythrose 4-phosphate and phosphoenolpyruvate: step 6/7. In terms of biological role, catalyzes the transfer of the enolpyruvyl moiety of phosphoenolpyruvate (PEP) to the 5-hydroxyl of shikimate-3-phosphate (S3P) to produce enolpyruvyl shikimate-3-phosphate and inorganic phosphate. The protein is 3-phosphoshikimate 1-carboxyvinyltransferase of Campylobacter jejuni (strain RM1221).